The sequence spans 354 residues: MAGNTFGELFRVTTWGESHGPGIGVVIDGCPPGLALDEAGVQKMLDRRKPGGGSIASTARKEADRAVILSGVFEGKTTGTPILIMAHNRDARSSAYTDIAGLFRPGHGDITYTAKYGIRDWRGGGRASARETFGRVAAGAVAAELLRLSGISVAAYTLELGGIRATTIDVGQVDQNMFGCPDSTVMAAMTDRVTQVKRRGDSVGGIVEVRADGVPAGLGEPVFDKLDADIAKALMSIGAVKGVEIGAGFEASGMTGSRSNDEITPQGFATNNAGGILAGISNGDRIVARAAVKPIPSIGITQQTVDTNGKPASISIKGRHDISAIPRINVVCEAMVCLVLADHLLRQKAISWTR.

Arg-48 provides a ligand contact to NADP(+). FMN-binding positions include 126-128 (RAS), Ala-278, 293-297 (KPIPS), and Arg-319.

The protein belongs to the chorismate synthase family. Homotetramer. Requires FMNH2 as cofactor.

The catalysed reaction is 5-O-(1-carboxyvinyl)-3-phosphoshikimate = chorismate + phosphate. It participates in metabolic intermediate biosynthesis; chorismate biosynthesis; chorismate from D-erythrose 4-phosphate and phosphoenolpyruvate: step 7/7. Functionally, catalyzes the anti-1,4-elimination of the C-3 phosphate and the C-6 proR hydrogen from 5-enolpyruvylshikimate-3-phosphate (EPSP) to yield chorismate, which is the branch point compound that serves as the starting substrate for the three terminal pathways of aromatic amino acid biosynthesis. This reaction introduces a second double bond into the aromatic ring system. This is Chorismate synthase from Desulfosudis oleivorans (strain DSM 6200 / JCM 39069 / Hxd3) (Desulfococcus oleovorans).